The chain runs to 858 residues: RNA-directed RNA polymerase 2a (858 aa).

One can recognise a RdRp catalytic domain in the interval 511-624 (KHCFEIDLSK…FSVLPPVGDP (114 aa)). A compositionally biased stretch (basic and acidic residues) spans 772-785 (TKQREKKDGIERRR). Residues 772-830 (TKQREKKDGIERRRNDKRRTPTGSYGGGEEAETKVSQAESTGTRSQKSQREGAFKSQAV) form a disordered region. Over residues 805-817 (KVSQAESTGTRSQ) the composition is skewed to polar residues.

Belongs to the ssRNA positive-strand viruses RNA-directed RNA polymerase family. As to quaternary structure, interacts with replication protein 1a.

The enzyme catalyses RNA(n) + a ribonucleoside 5'-triphosphate = RNA(n+1) + diphosphate. In terms of biological role, RNA-dependent RNA polymerase which replicates the viral genome composed of 3 RNA segments, RNA1, RNA2 and RNA3. This is RNA-directed RNA polymerase 2a from Cucumber mosaic virus (strain As) (CMV).